The sequence spans 82 residues: Transcription elongation factor 1 homolog (82 aa).

Zn(2+) contacts are provided by C26, C29, C50, and C53.

The protein belongs to the ELOF1 family.

It is found in the nucleus. Functionally, transcription elongation factor implicated in the maintenance of proper chromatin structure in actively transcribed regions. The protein is Transcription elongation factor 1 homolog of Drosophila melanogaster (Fruit fly).